The primary structure comprises 385 residues: Lipid-A-disaccharide synthase 2 (385 aa).

Belongs to the LpxB family.

The catalysed reaction is a lipid X + a UDP-2-N,3-O-bis[(3R)-3-hydroxyacyl]-alpha-D-glucosamine = a lipid A disaccharide + UDP + H(+). It functions in the pathway bacterial outer membrane biogenesis; LPS lipid A biosynthesis. Its function is as follows. Condensation of UDP-2,3-diacylglucosamine and 2,3-diacylglucosamine-1-phosphate to form lipid A disaccharide, a precursor of lipid A, a phosphorylated glycolipid that anchors the lipopolysaccharide to the outer membrane of the cell. This Legionella pneumophila (strain Lens) protein is Lipid-A-disaccharide synthase 2.